A 236-amino-acid chain; its full sequence is Small ribosomal subunit protein uS2c (236 aa).

The protein belongs to the universal ribosomal protein uS2 family.

It is found in the plastid. The protein resides in the chloroplast. This is Small ribosomal subunit protein uS2c (rps2) from Chloranthus spicatus (Chulantree).